A 178-amino-acid polypeptide reads, in one-letter code: Lipid A deacylase PagL (178 aa).

An N-terminal signal peptide occupies residues 1–19 (MQFLKKNKPLFGIVTLALA). Catalysis depends on charge relay system residues His154, Ser156, and Asp168.

This sequence belongs to the PagL family. In terms of assembly, homodimer.

Its subcellular location is the cell outer membrane. The enzyme catalyses a 3-(acyloxy)acyl derivative of bacterial toxin + H2O = a 3-hydroxyacyl derivative of bacterial toxin + a fatty acid + H(+). In terms of biological role, has lipid A 3-O-deacylase activity. Hydrolyzes the ester bond at the 3 position of lipid A, a bioactive component of lipopolysaccharide (LPS), thereby releasing the primary fatty acyl moiety. This Bordetella bronchiseptica (strain ATCC BAA-588 / NCTC 13252 / RB50) (Alcaligenes bronchisepticus) protein is Lipid A deacylase PagL.